Reading from the N-terminus, the 103-residue chain is Putative membrane protein insertion efficiency factor (103 aa).

The protein belongs to the UPF0161 family.

The protein resides in the cell inner membrane. Could be involved in insertion of integral membrane proteins into the membrane. This Chlamydia abortus (strain DSM 27085 / S26/3) (Chlamydophila abortus) protein is Putative membrane protein insertion efficiency factor.